The chain runs to 235 residues: uncharacterized protein (235 aa).

The 140-residue stretch at 82-221 (LAFKKFPPDP…DTGELIRESP (140 aa)) folds into the N-acetyltransferase domain.

The protein belongs to the acetyltransferase family.

The protein localises to the golgi apparatus membrane. Its subcellular location is the endoplasmic reticulum membrane. This is an uncharacterized protein from Schizosaccharomyces pombe (strain 972 / ATCC 24843) (Fission yeast).